Here is a 299-residue protein sequence, read N- to C-terminus: MSYWINKSICKLNYDSIDNIINTIEPHKPYNNNYCKDNFNIKYLDENNILDYYSFLYKNYNYKFNLDTIKWLLLNPFSKKEYNILLYNEDKIAGTISGIKKTISLHKKIYDCIHVTFLCIDKDYRNKYLHYFLIDEIMKNAKKNDIIIALFNSNIKFNNVKYINEYDTYITYGNKNLIKKSDYFNYELLNKKTQDLFFIYTIEEYNYWFNNNHVVVISYNNNFIALLKTNMLINKNIIQIFIIMEMYIRNNNIHKNYIPNNTIIYENYKCLKTIKLKSKLISYIYNYNFNNLSESIYLF.

It belongs to the NMT family.

The enzyme catalyses N-terminal glycyl-[protein] + tetradecanoyl-CoA = N-tetradecanoylglycyl-[protein] + CoA + H(+). In terms of biological role, adds a myristoyl group to the N-terminal glycine residue of certain proteins. This is Putative glycylpeptide N-tetradecanoyltransferase from Amsacta moorei entomopoxvirus (AmEPV).